Here is a 93-residue protein sequence, read N- to C-terminus: UPF0250 protein PA3998 (93 aa).

This sequence belongs to the UPF0250 family.

The polypeptide is UPF0250 protein PA3998 (Pseudomonas aeruginosa (strain ATCC 15692 / DSM 22644 / CIP 104116 / JCM 14847 / LMG 12228 / 1C / PRS 101 / PAO1)).